Consider the following 625-residue polypeptide: MFGNNLNSTLIQDLDRLENRLREIPLEPGVYFLRDQNGEILYIGKSKKLRSRVRSYFRPSQPLSPRIALMVRQVTEIEFIVTDTEAESLALEANLIKQHQPHFNTLLKDDKKYPYICITWSETYPRIFITRKRRINNQKDRYYGPYVDTRLLRYTLHLIKRTFPLRQRPQPLFKDRPCLNYDIGRCPGVCQKLISPQDYRETLQKVAMIFQGRTGELLEKLATKMLAASENLDFEQAATIRDQIRGLQALNTDQKVSLPDDTVSRDAIALAKDEQHCCIQLFQVRSGRLVGRLGFFADSQSANEGEILQKVLEEHYLSVEGVEIPSEILLPCELPEGEVLAGWLREKKGRKVELTVPQRQSKADLLAMVEKNALYELEKTKRSADRDLQSLQDLAVILDLPALPHRIEGYDISHIQGSNAVASGVVFIDGVAANQHYRHYKIKNPEVKIGHSDDFASLAEVIRRRFRRYAENPDNIAESDDFPDLVMIDGGKGQLSAVVAVLGEMNLLEQVKVVSLAKQREEIFLPGESSPLETDKEQPGVQLLRRVRDEAHRFAVSFHRQQRMQKSRRSRLDEIPGLGFKRQKELLAHFHSLDYIREASLEQLQQVTGIGEQLAKEIYNYFHPR.

Positions 26–105 (LEPGVYFLRD…IKQHQPHFNT (80 aa)) constitute a GIY-YIG domain. The UVR domain occupies 215 to 250 (GELLEKLATKMLAASENLDFEQAATIRDQIRGLQAL).

It belongs to the UvrC family. Interacts with UvrB in an incision complex.

The protein localises to the cytoplasm. The UvrABC repair system catalyzes the recognition and processing of DNA lesions. UvrC both incises the 5' and 3' sides of the lesion. The N-terminal half is responsible for the 3' incision and the C-terminal half is responsible for the 5' incision. This Microcystis aeruginosa (strain NIES-843 / IAM M-2473) protein is UvrABC system protein C.